Reading from the N-terminus, the 325-residue chain is MANIEKDHQKVILVGDGAVGSYYAYALTLQGIAQEVGIVDIFKEKTQGDAIDLSDALAFTSPKKIYAAEYSDAKDADVVVITAGAPQKPGETRLDLVSKNLKILKTIVDPIVESGFNGIFLVAANPVDILTYATWKLSGFPKERVIGSGTSLDSARFRKDIAEMVNVDARSVHAYIMGEHGDTEFPVWSHANIGGIKISEWVKAHPEVKEEELVKIFESVRDAAYTIINLKGATFYGIGTALARITKAILDDENAVLPLSVFMDGQYGLNDIFIGSPAVINRSGITNILEIPLTDHEMESMHKSAKQLKDIVTKAFEELDIETRQ.

NAD(+) contacts are provided by residues valine 19, aspartate 40, lysine 45, tyrosine 70, and glycine 84–alanine 85. Substrate is bound by residues glutamine 87 and arginine 93. NAD(+) contacts are provided by residues threonine 106, alanine 123–asparagine 125, and serine 148. A substrate-binding site is contributed by asparagine 125 to aspartate 128. Aspartate 153–arginine 156 lines the substrate pocket. Arginine 158 and histidine 173 together coordinate beta-D-fructose 1,6-bisphosphate. Catalysis depends on histidine 180, which acts as the Proton acceptor. A Phosphotyrosine modification is found at tyrosine 225. Threonine 234 lines the substrate pocket.

It belongs to the LDH/MDH superfamily. LDH family. Homotetramer.

The protein localises to the cytoplasm. It carries out the reaction (S)-lactate + NAD(+) = pyruvate + NADH + H(+). The protein operates within fermentation; pyruvate fermentation to lactate; (S)-lactate from pyruvate: step 1/1. With respect to regulation, allosterically activated by fructose 1,6-bisphosphate (FBP). In terms of biological role, catalyzes the conversion of lactate to pyruvate. In Latilactobacillus sakei (Lactobacillus sakei), this protein is L-lactate dehydrogenase.